Reading from the N-terminus, the 670-residue chain is Transcription factor Ken 2 (670 aa).

Positions 108 to 176 (TDLLLICDGK…LYSGQVYVRS (69 aa)) constitute a BTB domain. Disordered regions lie at residues 200–288 (SDGS…DRDR) and 307–470 (NNHP…SDDA). Positions 218–230 (NRNTEGITGSSVV) are enriched in polar residues. Basic residues predominate over residues 325-338 (HHLHHHHHHHHRQL). 2 stretches are compositionally biased toward gly residues: residues 351–368 (GGGSGNDGASEGGSGESG) and 389–400 (SGGGGAGSGRRS). Acidic residues predominate over residues 407 to 419 (EPAEDDEDYELDV). A compositionally biased stretch (polar residues) spans 451–464 (SDPVNLSIVKQQQD). The segment at 586 to 594 (NLKTHLRVH) adopts a C2H2-type 1; degenerate zinc-finger fold. C2H2-type zinc fingers lie at residues 600 to 623 (FACRLCVAMFKQKAHLLKHLCSVH) and 636 to 658 (YTCCFCSLVFETLQELVRHLSGH).

Its subcellular location is the nucleus. In terms of biological role, transcription factor required for terminalia development. Negative regulator of the JAK/STAT pathway: represses JAK/STAT-dependent expression of ventral veins lacking (vvl) in the posterior spiracles. This Culex quinquefasciatus (Southern house mosquito) protein is Transcription factor Ken 2.